Consider the following 284-residue polypeptide: Pantothenate synthetase (284 aa).

An ATP-binding site is contributed by 30-37 (MGNLHDGH). Histidine 37 functions as the Proton donor in the catalytic mechanism. Glutamine 61 lines the (R)-pantoate pocket. Glutamine 61 is a binding site for beta-alanine. Position 149–152 (149–152 (GEKD)) interacts with ATP. Glutamine 155 is a (R)-pantoate binding site. ATP is bound by residues valine 178 and 186 to 189 (LSSR).

It belongs to the pantothenate synthetase family. As to quaternary structure, homodimer.

It is found in the cytoplasm. It catalyses the reaction (R)-pantoate + beta-alanine + ATP = (R)-pantothenate + AMP + diphosphate + H(+). The protein operates within cofactor biosynthesis; (R)-pantothenate biosynthesis; (R)-pantothenate from (R)-pantoate and beta-alanine: step 1/1. In terms of biological role, catalyzes the condensation of pantoate with beta-alanine in an ATP-dependent reaction via a pantoyl-adenylate intermediate. In Klebsiella pneumoniae subsp. pneumoniae (strain ATCC 700721 / MGH 78578), this protein is Pantothenate synthetase.